Consider the following 236-residue polypeptide: 2-C-methyl-D-erythritol 4-phosphate cytidylyltransferase (236 aa).

This sequence belongs to the IspD/TarI cytidylyltransferase family. IspD subfamily. In terms of assembly, homodimer.

The catalysed reaction is 2-C-methyl-D-erythritol 4-phosphate + CTP + H(+) = 4-CDP-2-C-methyl-D-erythritol + diphosphate. It participates in isoprenoid biosynthesis; isopentenyl diphosphate biosynthesis via DXP pathway; isopentenyl diphosphate from 1-deoxy-D-xylulose 5-phosphate: step 2/6. In terms of biological role, catalyzes the formation of 4-diphosphocytidyl-2-C-methyl-D-erythritol from CTP and 2-C-methyl-D-erythritol 4-phosphate (MEP). The polypeptide is 2-C-methyl-D-erythritol 4-phosphate cytidylyltransferase (Escherichia fergusonii (strain ATCC 35469 / DSM 13698 / CCUG 18766 / IAM 14443 / JCM 21226 / LMG 7866 / NBRC 102419 / NCTC 12128 / CDC 0568-73)).